We begin with the raw amino-acid sequence, 1029 residues long: Beta-galactosidase (1029 aa).

The substrate site is built by asparagine 108 and aspartate 207. Aspartate 207 serves as a coordination point for Na(+). Mg(2+)-binding residues include glutamate 422, histidine 424, and glutamate 467. Substrate is bound by residues glutamate 467 and 543–546 (EYAH). Glutamate 467 functions as the Proton donor in the catalytic mechanism. Glutamate 543 (nucleophile) is an active-site residue. Asparagine 603 lines the Mg(2+) pocket. Na(+) is bound by residues phenylalanine 607 and asparagine 610. The substrate site is built by asparagine 610 and tryptophan 1005.

It belongs to the glycosyl hydrolase 2 family. As to quaternary structure, homotetramer. The cofactor is Mg(2+). It depends on Na(+) as a cofactor.

It catalyses the reaction Hydrolysis of terminal non-reducing beta-D-galactose residues in beta-D-galactosides.. In Escherichia coli, this protein is Beta-galactosidase.